Consider the following 438-residue polypeptide: Adenylosuccinate synthetase (438 aa).

Residues 13-19 (GDEGKGK) and 41-43 (GHT) each bind GTP. Aspartate 14 acts as the Proton acceptor in catalysis. The Mg(2+) site is built by aspartate 14 and glycine 41. IMP is bound by residues 14-17 (DEGK), 39-42 (NAGH), threonine 130, arginine 144, glutamine 225, threonine 240, and arginine 310. Histidine 42 functions as the Proton donor in the catalytic mechanism. 306-312 (ATTGRLR) serves as a coordination point for substrate. GTP is bound by residues arginine 312, 338 to 340 (KLD), and 421 to 423 (STG).

It belongs to the adenylosuccinate synthetase family. Homodimer. The cofactor is Mg(2+).

The protein localises to the cytoplasm. The catalysed reaction is IMP + L-aspartate + GTP = N(6)-(1,2-dicarboxyethyl)-AMP + GDP + phosphate + 2 H(+). It functions in the pathway purine metabolism; AMP biosynthesis via de novo pathway; AMP from IMP: step 1/2. Its function is as follows. Plays an important role in the de novo pathway of purine nucleotide biosynthesis. Catalyzes the first committed step in the biosynthesis of AMP from IMP. In Vibrio vulnificus (strain YJ016), this protein is Adenylosuccinate synthetase.